Here is a 299-residue protein sequence, read N- to C-terminus: GTPase Era (299 aa).

The 171-residue stretch at 5 to 175 (RSGFVCFVGR…TDVLAGKLPP (171 aa)) folds into the Era-type G domain. The segment at 13-20 (GRPNTGKS) is G1. 13–20 (GRPNTGKS) contributes to the GTP binding site. The tract at residues 39–43 (QTTRH) is G2. The segment at 60–63 (DTPG) is G3. Residues 60 to 64 (DTPGL) and 124 to 127 (TKID) contribute to the GTP site. The segment at 124–127 (TKID) is G4. The G5 stretch occupies residues 154 to 156 (VSA). A KH type-2 domain is found at 206–285 (VRDELPHSLA…YLDLRVKIAK (80 aa)).

This sequence belongs to the TRAFAC class TrmE-Era-EngA-EngB-Septin-like GTPase superfamily. Era GTPase family. Monomer.

Its subcellular location is the cell envelope. It is found in the secreted. It localises to the cell wall. Exhibits GTPase activity. Binds RNA but is probably not involved in ribosome assembly in mycobacteria. The protein is GTPase Era of Mycobacterium sp. (strain KMS).